A 325-amino-acid polypeptide reads, in one-letter code: Porphobilinogen deaminase (325 aa).

C253 is modified (S-(dipyrrolylmethanemethyl)cysteine).

It belongs to the HMBS family. Dipyrromethane serves as cofactor.

It catalyses the reaction 4 porphobilinogen + H2O = hydroxymethylbilane + 4 NH4(+). The protein operates within porphyrin-containing compound metabolism; protoporphyrin-IX biosynthesis; coproporphyrinogen-III from 5-aminolevulinate: step 2/4. Functionally, tetrapolymerization of the monopyrrole PBG into the hydroxymethylbilane pre-uroporphyrinogen in several discrete steps. The chain is Porphobilinogen deaminase (hemC) from Dictyostelium discoideum (Social amoeba).